The chain runs to 212 residues: Thymidylate kinase (212 aa).

Position 10–17 (10–17) interacts with ATP; sequence GLDGAGKT.

The protein belongs to the thymidylate kinase family.

It carries out the reaction dTMP + ATP = dTDP + ADP. Functionally, phosphorylation of dTMP to form dTDP in both de novo and salvage pathways of dTTP synthesis. This Blochmanniella pennsylvanica (strain BPEN) protein is Thymidylate kinase.